The sequence spans 135 residues: Retinol-binding protein 1 (135 aa).

The segment at 22–32 (RALDVNVALRK) is important for interaction with STRA6. Lys41, Met63, and Gln109 together coordinate all-trans-retinol.

Belongs to the calycin superfamily. Fatty-acid binding protein (FABP) family. Interacts (only as retinol-free apoprotein) with STRA6.

It is found in the cytoplasm. The protein resides in the lipid droplet. Its function is as follows. Cytoplasmic retinol-binding protein. Accepts retinol from the transport protein STRA6, and thereby contributes to retinol uptake, storage and retinoid homeostasis. This is Retinol-binding protein 1 (Rbp1) from Mus musculus (Mouse).